The primary structure comprises 396 residues: Vacuolar protease A (396 aa).

Positions 1–17 are cleaved as a signal peptide; the sequence is MKGALLTAAMLLGSAQA. The propeptide at 18-70 is activation peptide; sequence GVHTMKLKKVPLAEQLESVPIDVQVQHLGQKYTGLRTESHTQAMFKATDAQVS. A Peptidase A1 domain is found at 85–392; it reads YFSEITIGTP…DLGADTVGIA (308 aa). The active site involves Asp103. Cysteines 116 and 121 form a disulfide. Residue Asn138 is glycosylated (N-linked (GlcNAc...) asparagine). The active site involves Asp284. Cys318 and Cys351 are joined by a disulfide. Asn335 carries N-linked (GlcNAc...) asparagine glycosylation.

The protein belongs to the peptidase A1 family.

Its subcellular location is the vacuole. The chain is Vacuolar protease A (pep-4) from Neurospora crassa (strain ATCC 24698 / 74-OR23-1A / CBS 708.71 / DSM 1257 / FGSC 987).